A 1177-amino-acid polypeptide reads, in one-letter code: Chromosome partition protein Smc (1177 aa).

Ala34–Asn41 serves as a coordination point for ATP. The stretch at Ser167–Arg506 forms a coiled coil. An SMC hinge domain is found at Gly521 to Arg627. A coiled-coil region spans residues Leu659 to Val1012.

Belongs to the SMC family. In terms of assembly, homodimer.

The protein resides in the cytoplasm. In terms of biological role, required for chromosome condensation and partitioning. Binds single-stranded but not double-stranded DNA. This Pyrococcus furiosus (strain ATCC 43587 / DSM 3638 / JCM 8422 / Vc1) protein is Chromosome partition protein Smc.